We begin with the raw amino-acid sequence, 467 residues long: Fumarate hydratase class II (467 aa).

Substrate-binding positions include 98–100 (SGT), Arg126, 129–132 (HPND), 139–141 (SSN), and Thr187. Residue His188 is the Proton donor/acceptor of the active site. Ser318 is a catalytic residue. Residues Ser319 and 324 to 326 (KVN) contribute to the substrate site.

The protein belongs to the class-II fumarase/aspartase family. Fumarase subfamily. Homotetramer.

Its subcellular location is the cytoplasm. It carries out the reaction (S)-malate = fumarate + H2O. The protein operates within carbohydrate metabolism; tricarboxylic acid cycle; (S)-malate from fumarate: step 1/1. Involved in the TCA cycle. Catalyzes the stereospecific interconversion of fumarate to L-malate. This is Fumarate hydratase class II from Escherichia coli O157:H7.